Reading from the N-terminus, the 187-residue chain is uncharacterized protein (187 aa).

Residues 8–28 (FFILLAINFILAAGFVALVLL) traverse the membrane as a helical segment.

It localises to the membrane. This is an uncharacterized protein from Bacillus subtilis (strain 168).